The primary structure comprises 379 residues: Queuine tRNA-ribosyltransferase (379 aa).

Asp94 (proton acceptor) is an active-site residue. Residues 94–98, Asp148, Gln191, and Gly218 each bind substrate; that span reads DSGGF. The interval 249–255 is RNA binding; the sequence is GVGSPDS. Asp268 acts as the Nucleophile in catalysis. The tract at residues 273–277 is RNA binding; important for wobble base 34 recognition; it reads TRIAR. Cys306, Cys308, Cys311, and His337 together coordinate Zn(2+).

The protein belongs to the queuine tRNA-ribosyltransferase family. As to quaternary structure, homodimer. Within each dimer, one monomer is responsible for RNA recognition and catalysis, while the other monomer binds to the replacement base PreQ1. Zn(2+) serves as cofactor.

It catalyses the reaction 7-aminomethyl-7-carbaguanine + guanosine(34) in tRNA = 7-aminomethyl-7-carbaguanosine(34) in tRNA + guanine. It participates in tRNA modification; tRNA-queuosine biosynthesis. In terms of biological role, catalyzes the base-exchange of a guanine (G) residue with the queuine precursor 7-aminomethyl-7-deazaguanine (PreQ1) at position 34 (anticodon wobble position) in tRNAs with GU(N) anticodons (tRNA-Asp, -Asn, -His and -Tyr). Catalysis occurs through a double-displacement mechanism. The nucleophile active site attacks the C1' of nucleotide 34 to detach the guanine base from the RNA, forming a covalent enzyme-RNA intermediate. The proton acceptor active site deprotonates the incoming PreQ1, allowing a nucleophilic attack on the C1' of the ribose to form the product. After dissociation, two additional enzymatic reactions on the tRNA convert PreQ1 to queuine (Q), resulting in the hypermodified nucleoside queuosine (7-(((4,5-cis-dihydroxy-2-cyclopenten-1-yl)amino)methyl)-7-deazaguanosine). The protein is Queuine tRNA-ribosyltransferase of Listeria monocytogenes serovar 1/2a (strain ATCC BAA-679 / EGD-e).